We begin with the raw amino-acid sequence, 109 residues long: MAQFEWVHAAWLALAIVLEIVANVFLKFSDGFRRKIFGLLSLAAVLAAFSALSQAVKGIDLSVAYALWGGFGIAATLAAGWILFGQRLNRKGWIGLVLLLAGMIMVKLA.

The next 4 membrane-spanning stretches (helical) occupy residues 6–26 (WVHA…NVFL), 36–56 (IFGL…SQAV), 64–84 (AYAL…WILF), and 88–108 (LNRK…MVKL).

The protein belongs to the drug/metabolite transporter (DMT) superfamily. Small multidrug resistance (SMR) (TC 2.A.7.1) family. MdtI subfamily. Forms a complex with MdtJ.

The protein localises to the cell inner membrane. Its function is as follows. Catalyzes the excretion of spermidine. This is Spermidine export protein MdtI from Escherichia coli O139:H28 (strain E24377A / ETEC).